The sequence spans 147 residues: Endoribonuclease YbeY (147 aa).

3 residues coordinate Zn(2+): H109, H113, and H119.

The protein belongs to the endoribonuclease YbeY family. Zn(2+) is required as a cofactor.

It is found in the cytoplasm. In terms of biological role, single strand-specific metallo-endoribonuclease involved in late-stage 70S ribosome quality control and in maturation of the 3' terminus of the 16S rRNA. This is Endoribonuclease YbeY from Thiobacillus denitrificans (strain ATCC 25259 / T1).